The sequence spans 252 residues: Zinc import ATP-binding protein ZnuC (252 aa).

The region spanning 5–220 is the ABC transporter domain; sequence VTLNKISVTF…PEFIAMFGQR (216 aa). Residue 37 to 44 participates in ATP binding; it reads GPNGAGKS.

The protein belongs to the ABC transporter superfamily. Zinc importer (TC 3.A.1.15.5) family. The complex is composed of two ATP-binding proteins (ZnuC), two transmembrane proteins (ZnuB) and a solute-binding protein (ZnuA).

The protein resides in the cell inner membrane. It catalyses the reaction Zn(2+)(out) + ATP(in) + H2O(in) = Zn(2+)(in) + ADP(in) + phosphate(in) + H(+)(in). Part of the ABC transporter complex ZnuABC involved in zinc import. Responsible for energy coupling to the transport system. This is Zinc import ATP-binding protein ZnuC from Yersinia enterocolitica serotype O:8 / biotype 1B (strain NCTC 13174 / 8081).